Reading from the N-terminus, the 898-residue chain is MENAGPDAPVRLTPMMEQYIEIKAANVDSLLFYRMGDFYELFFDDAVAASAALGITLTKRGKHLGEDIPMCGVPVHAADDYLQKLIAKGYRVAVCEQVEDPAEAKKRGSKSVVKRDVIRLVTPGTLTEEKLLDPAQANFLMAMGRTRGDGALALAWIDISTGTFRVAETTPDRLFADIMRVDPRELVVADSAFHDEELRPVFDLIGKAVTPQPATLFDSAAAQTRIQHYFNVATLDGFGQFSRPELSAISGAIAYIEKTQISERPPLMRPEREHEGGTLFIDPATRASLELARTMSGKRDGSLLKAIDRTVTGGGARLLAERLTAPLTSPKEIAPRLDSVSWCLSEQTLCEALRLELKGVPDMPRALSRLAVGRGGPRDLGALACGFEAAGGIASLLDGALLPDELAAAREAIEKMPAGFAAHLDRALADELPLLKRDGGFVREGYNSELDEMRALRDQSRRVIAGLQADYIEETGIKSLKIKHNNVLGYFIEVTANNSGAMTDTDEAKSRFIHRQTMANAMRFTTTELAELESKIANAADRALSIELAIFEELTAEAVAHADSIRAAASALSVFDVSTALAVLAEEQGYCRPHVDDSLSFNIVAGRHPVVEQALRRQAANPFVANDCDLSPQRDGGDGAIWLLTGPNMGGKSTFLRQNALIAILAQMGSFVPAGSAHIGVVDRLFSRVGASDDLARGRSTFMVEMVETAAILNQAGEHSLVILDEIGRGTATFDGLSIAWAAVEYLHEKNRCRALFATHFHEMTALSEKLERLSNVTMRVKEWDNDVIFLHEVAKGAADRSYGVQVARLAGLPEAVVNRARDVLHQLEAGETSGKADRLIDDLPLFSVMLQQEKPKPQIQAKDSELANAVAAISPDELTPREALDLIYKLKELAGKA.

646–653 (GPNMGGKS) serves as a coordination point for ATP.

Belongs to the DNA mismatch repair MutS family.

Functionally, this protein is involved in the repair of mismatches in DNA. It is possible that it carries out the mismatch recognition step. This protein has a weak ATPase activity. This is DNA mismatch repair protein MutS from Brucella ovis (strain ATCC 25840 / 63/290 / NCTC 10512).